The chain runs to 231 residues: NADH-quinone oxidoreductase subunit C (231 aa).

It belongs to the complex I 30 kDa subunit family. In terms of assembly, NDH-1 is composed of 14 different subunits. Subunits NuoB, C, D, E, F, and G constitute the peripheral sector of the complex.

Its subcellular location is the cell membrane. The enzyme catalyses a quinone + NADH + 5 H(+)(in) = a quinol + NAD(+) + 4 H(+)(out). In terms of biological role, NDH-1 shuttles electrons from NADH, via FMN and iron-sulfur (Fe-S) centers, to quinones in the respiratory chain. The immediate electron acceptor for the enzyme in this species is believed to be a menaquinone. Couples the redox reaction to proton translocation (for every two electrons transferred, four hydrogen ions are translocated across the cytoplasmic membrane), and thus conserves the redox energy in a proton gradient. The polypeptide is NADH-quinone oxidoreductase subunit C (Mycobacterium sp. (strain JLS)).